A 475-amino-acid chain; its full sequence is Putative response regulator NtrX-like (475 aa).

Residues 5 to 121 (DVLILDDEES…KLIILLKRAC (117 aa)) enclose the Response regulatory domain. Asp54 carries the 4-aspartylphosphate modification. The region spanning 143–369 (LVGGCSVTLK…LRNVVEWTLI (227 aa)) is the Sigma-54 factor interaction domain. Residues 171–178 (GKVGSGKE) and 232–241 (ANNGTLYIDE) each bind ATP.

Member of the two-component regulatory system RT0550/RT0603. The sequence is that of Putative response regulator NtrX-like from Rickettsia typhi (strain ATCC VR-144 / Wilmington).